The sequence spans 79 residues: MDIKSEVIEIIDELFMEDVSDMMDEDLFDAGVLDSMGTVELIVEIENRFDIRVPVTEFGRDDWNTANKIIAGIVELQNA.

The Carrier domain occupies 1 to 77; that stretch reads MDIKSEVIEI…KIIAGIVELQ (77 aa). Residue serine 35 is modified to O-(pantetheine 4'-phosphoryl)serine.

This sequence belongs to the DltC family. 4'-phosphopantetheine is transferred from CoA to a specific serine of apo-DCP.

Its subcellular location is the cytoplasm. The protein operates within cell wall biogenesis; lipoteichoic acid biosynthesis. Functionally, carrier protein involved in the D-alanylation of lipoteichoic acid (LTA). The loading of thioester-linked D-alanine onto DltC is catalyzed by D-alanine--D-alanyl carrier protein ligase DltA. The DltC-carried D-alanyl group is further transferred to cell membrane phosphatidylglycerol (PG) by forming an ester bond, probably catalyzed by DltD. D-alanylation of LTA plays an important role in modulating the properties of the cell wall in Gram-positive bacteria, influencing the net charge of the cell wall. This chain is D-alanyl carrier protein, found in Streptococcus pneumoniae serotype 2 (strain D39 / NCTC 7466).